A 387-amino-acid chain; its full sequence is GTPase Obg (387 aa).

Positions 1–159 (MKFVDEAIIR…RSLKLELLLL (159 aa)) constitute an Obg domain. The 174-residue stretch at 160 to 333 (ADVGLLGMPN…LALKLLDFID (174 aa)) folds into the OBG-type G domain. GTP contacts are provided by residues 166 to 173 (GMPNAGKS), 191 to 195 (FTTLV), 213 to 216 (DIPG), 283 to 286 (NKAD), and 314 to 316 (SAY). Mg(2+) is bound by residues serine 173 and threonine 193.

This sequence belongs to the TRAFAC class OBG-HflX-like GTPase superfamily. OBG GTPase family. As to quaternary structure, monomer. Mg(2+) is required as a cofactor.

The protein localises to the cytoplasm. In terms of biological role, an essential GTPase which binds GTP, GDP and possibly (p)ppGpp with moderate affinity, with high nucleotide exchange rates and a fairly low GTP hydrolysis rate. Plays a role in control of the cell cycle, stress response, ribosome biogenesis and in those bacteria that undergo differentiation, in morphogenesis control. This is GTPase Obg from Shewanella pealeana (strain ATCC 700345 / ANG-SQ1).